The following is a 308-amino-acid chain: Ribosomal protein L11 methyltransferase (308 aa).

Residues threonine 157, glycine 178, aspartate 200, and asparagine 243 each coordinate S-adenosyl-L-methionine.

It belongs to the methyltransferase superfamily. PrmA family.

It localises to the cytoplasm. The enzyme catalyses L-lysyl-[protein] + 3 S-adenosyl-L-methionine = N(6),N(6),N(6)-trimethyl-L-lysyl-[protein] + 3 S-adenosyl-L-homocysteine + 3 H(+). Its function is as follows. Methylates ribosomal protein L11. The protein is Ribosomal protein L11 methyltransferase of Desulforamulus reducens (strain ATCC BAA-1160 / DSM 100696 / MI-1) (Desulfotomaculum reducens).